The chain runs to 316 residues: Solute carrier family 25 member 32 (316 aa).

Solcar repeat units follow at residues 20 to 109, 118 to 209, and 222 to 306; these read HVRY…IKSY, LEPL…LKLK, and LSTA…VSHF. Transmembrane regions (helical) follow at residues 26–46, 89–106, 123–143, 185–203, 227–243, and 281–300; these read LVAG…LDLV, VWGA…YNAI, YLVS…PLWV, GFVP…FMAY, YISV…AATY, and GIAP…FVVY.

This sequence belongs to the mitochondrial carrier (TC 2.A.29) family.

Its subcellular location is the mitochondrion inner membrane. It catalyses the reaction FAD(in) = FAD(out). Its function is as follows. Facilitates flavin adenine dinucleotide (FAD) translocation across the mitochondrial inner membrane into the mitochondrial matrix where it acts as a redox cofactor to assist flavoenzyme activities in fundamental metabolic processes including fatty acid beta-oxidation, amino acid and choline metabolism as well as mitochondrial electron transportation. In particular, provides FAD to DLD dehydrogenase of the glycine cleavage system, part of mitochondrial one-carbon metabolic pathway involved in neural tube closure in early embryogenesis. This is Solute carrier family 25 member 32 from Mus musculus (Mouse).